The sequence spans 231 residues: Acyltransferase PGAP2 (231 aa).

Over 1–22 (MQQVPYGSVDRDKPLIRVPFTR) the chain is Cytoplasmic. Residues 23-43 (LAVITVCLPLLGLVACIVLAM) traverse the membrane as a helical segment. At 44–78 (LYHYNDATYTHCQVPNYLPSISAAISLTPERYIWR) the chain is on the lumenal side. The helical transmembrane segment at 79–99 (FSIGLHSAPRFLVAAAYLSFY) threads the bilayer. At 100–110 (RGRFSRRLTEQ) the chain is on the cytoplasmic side. The chain crosses the membrane as a helical span at residues 111 to 131 (LLSGFTFLLALSENVGLLLLT). At 132-146 (YVSSTETYSVHKSGF) the chain is on the lumenal side. Residues 147–167 (ILFIGSSLFHMLCTCKLWSLI) form a helical membrane-spanning segment. The Cytoplasmic portion of the chain corresponds to 168–179 (VKYSISSEEMMS). The helical transmembrane segment at 180–200 (YWFKLRLFLFNGGCCVLAVYF) threads the bilayer. Over 201–231 (YRRHNTYCEEGITHASRCVSIWWCCPTWPST) the chain is Lumenal.

Belongs to the PGAP2 family.

It localises to the golgi apparatus membrane. Involved in the fatty acid remodeling steps of GPI-anchor maturation where the unsaturated acyl chain at sn-2 of inositol phosphate is replaced by a saturated stearoyl chain. May catalyze the second step of the fatty acid remodeling, by reacylating a lyso-GPI intermediate at sn-2 of inositol phosphate by a saturated chain. The fatty acid remodeling steps is critical for the integration of GPI-APs into lipid rafts. The protein is Acyltransferase PGAP2 of Danio rerio (Zebrafish).